The primary structure comprises 273 residues: Putative pyruvate, phosphate dikinase regulatory protein (273 aa).

149 to 156 lines the ADP pocket; that stretch reads GPSRTSKT.

Belongs to the pyruvate, phosphate/water dikinase regulatory protein family. PDRP subfamily.

It catalyses the reaction N(tele)-phospho-L-histidyl/L-threonyl-[pyruvate, phosphate dikinase] + ADP = N(tele)-phospho-L-histidyl/O-phospho-L-threonyl-[pyruvate, phosphate dikinase] + AMP + H(+). It carries out the reaction N(tele)-phospho-L-histidyl/O-phospho-L-threonyl-[pyruvate, phosphate dikinase] + phosphate + H(+) = N(tele)-phospho-L-histidyl/L-threonyl-[pyruvate, phosphate dikinase] + diphosphate. Bifunctional serine/threonine kinase and phosphorylase involved in the regulation of the pyruvate, phosphate dikinase (PPDK) by catalyzing its phosphorylation/dephosphorylation. The polypeptide is Putative pyruvate, phosphate dikinase regulatory protein (Rickettsia rickettsii (strain Iowa)).